Consider the following 61-residue polypeptide: Tubulin alpha-4 chain (61 aa).

Glutamine 11 serves as a coordination point for GTP. Positions glutamine 35 to tyrosine 61 are disordered. The residue at position 40 (lysine 40) is an N6-acetyllysine. The segment covering alanine 47–tyrosine 61 has biased composition (acidic residues).

The protein belongs to the tubulin family. Dimer of alpha and beta chains. A typical microtubule is a hollow water-filled tube with an outer diameter of 25 nm and an inner diameter of 15 nM. Alpha-beta heterodimers associate head-to-tail to form protofilaments running lengthwise along the microtubule wall with the beta-tubulin subunit facing the microtubule plus end conferring a structural polarity. Microtubules usually have 13 protofilaments but different protofilament numbers can be found in some organisms and specialized cells. Mg(2+) serves as cofactor. Undergoes a tyrosination/detyrosination cycle, the cyclic removal and re-addition of a C-terminal tyrosine residue by the enzymes tubulin tyrosine carboxypeptidase (TTCP) and tubulin tyrosine ligase (TTL), respectively. In terms of processing, acetylation of alpha chains at Lys-40 stabilizes microtubules and affects affinity and processivity of microtubule motors. This modification has a role in multiple cellular functions, ranging from cell motility, cell cycle progression or cell differentiation to intracellular trafficking and signaling.

The protein localises to the cytoplasm. Its subcellular location is the cytoskeleton. It carries out the reaction GTP + H2O = GDP + phosphate + H(+). In terms of biological role, tubulin is the major constituent of microtubules, a cylinder consisting of laterally associated linear protofilaments composed of alpha- and beta-tubulin heterodimers. Microtubules grow by the addition of GTP-tubulin dimers to the microtubule end, where a stabilizing cap forms. Below the cap, tubulin dimers are in GDP-bound state, owing to GTPase activity of alpha-tubulin. The sequence is that of Tubulin alpha-4 chain (TUBA4) from Zea mays (Maize).